A 272-amino-acid chain; its full sequence is Large ribosomal subunit protein uL2 (272 aa).

The disordered stretch occupies residues 222–272 (GVAMNPIDHPLGGGEGKSSGGRAACTPWGKPEGVKTRKNKRTDKFIIKRRK). Residues 263 to 272 (TDKFIIKRRK) are compositionally biased toward basic and acidic residues.

The protein belongs to the universal ribosomal protein uL2 family. Part of the 50S ribosomal subunit. Forms a bridge to the 30S subunit in the 70S ribosome.

In terms of biological role, one of the primary rRNA binding proteins. Required for association of the 30S and 50S subunits to form the 70S ribosome, for tRNA binding and peptide bond formation. It has been suggested to have peptidyltransferase activity; this is somewhat controversial. Makes several contacts with the 16S rRNA in the 70S ribosome. In Thermodesulfovibrio yellowstonii (strain ATCC 51303 / DSM 11347 / YP87), this protein is Large ribosomal subunit protein uL2.